Here is a 305-residue protein sequence, read N- to C-terminus: Probable xyloglucan endotransglucosylase/hydrolase protein 21 (305 aa).

Positions M1–G25 are cleaved as a signal peptide. Positions K26–F216 constitute a GH16 domain. A glycan (N-linked (GlcNAc...) asparagine) is linked at N46. Catalysis depends on E102, which acts as the Nucleophile. E106 functions as the Proton donor in the catalytic mechanism. E106 contributes to the xyloglucan binding site. N-linked (GlcNAc...) asparagine glycosylation occurs at N110. Residues H119–N121 and D129–E131 each bind xyloglucan. N146 is a glycosylation site (N-linked (GlcNAc...) asparagine). Xyloglucan contacts are provided by residues D195–W196 and G200. N-linked (GlcNAc...) asparagine glycosylation is found at N206 and N231. Disulfide bonds link C225–C239 and C282–C296. Over residues T236–S253 the composition is skewed to low complexity. Residues T236–Q258 form a disordered region. R287 contacts xyloglucan.

Belongs to the glycosyl hydrolase 16 family. XTH group 2 subfamily. Contains at least one intrachain disulfide bond essential for its enzymatic activity. In terms of tissue distribution, predominantly expressed in green siliques.

The protein resides in the secreted. It is found in the cell wall. The protein localises to the extracellular space. Its subcellular location is the apoplast. The enzyme catalyses breaks a beta-(1-&gt;4) bond in the backbone of a xyloglucan and transfers the xyloglucanyl segment on to O-4 of the non-reducing terminal glucose residue of an acceptor, which can be a xyloglucan or an oligosaccharide of xyloglucan.. Functionally, catalyzes xyloglucan endohydrolysis (XEH) and/or endotransglycosylation (XET). Cleaves and religates xyloglucan polymers, an essential constituent of the primary cell wall, and thereby participates in cell wall construction of growing tissues. This chain is Probable xyloglucan endotransglucosylase/hydrolase protein 21 (XTH21), found in Arabidopsis thaliana (Mouse-ear cress).